Here is a 205-residue protein sequence, read N- to C-terminus: Small ribosomal subunit protein uS5 (205 aa).

The region spanning 49–112 (LVDEVLDINM…VSAKINLVKV (64 aa)) is the S5 DRBM domain.

The protein belongs to the universal ribosomal protein uS5 family. Part of the 30S ribosomal subunit. Contacts protein S4.

In terms of biological role, with S4 and S12 plays an important role in translational accuracy. This is Small ribosomal subunit protein uS5 from Methanospirillum hungatei JF-1 (strain ATCC 27890 / DSM 864 / NBRC 100397 / JF-1).